The chain runs to 231 residues: Cytochrome c oxidase subunit 2 (231 aa).

Topologically, residues 1-14 (MAHPAQLGLQNATS) are mitochondrial intermembrane. A helical transmembrane segment spans residues 15 to 45 (PIMEELIAFHDHALMIIFLISSLVLYVISLM). The Mitochondrial matrix segment spans residues 46-59 (LTTKLTHTSTMNAQ). Residues 60-87 (EIEMIWTILPAIILIMIALPSLRILYMT) traverse the membrane as a helical segment. Residues 88 to 231 (DEFNKPYLTL…WASYLYIVSL (144 aa)) are Mitochondrial intermembrane-facing. 6 residues coordinate Cu cation: His-161, Cys-196, Glu-198, Cys-200, His-204, and Met-207. Position 198 (Glu-198) interacts with Mg(2+).

Belongs to the cytochrome c oxidase subunit 2 family. In terms of assembly, component of the cytochrome c oxidase (complex IV, CIV), a multisubunit enzyme composed of 14 subunits. The complex is composed of a catalytic core of 3 subunits MT-CO1, MT-CO2 and MT-CO3, encoded in the mitochondrial DNA, and 11 supernumerary subunits COX4I, COX5A, COX5B, COX6A, COX6B, COX6C, COX7A, COX7B, COX7C, COX8 and NDUFA4, which are encoded in the nuclear genome. The complex exists as a monomer or a dimer and forms supercomplexes (SCs) in the inner mitochondrial membrane with NADH-ubiquinone oxidoreductase (complex I, CI) and ubiquinol-cytochrome c oxidoreductase (cytochrome b-c1 complex, complex III, CIII), resulting in different assemblies (supercomplex SCI(1)III(2)IV(1) and megacomplex MCI(2)III(2)IV(2)). Found in a complex with TMEM177, COA6, COX18, COX20, SCO1 and SCO2. Interacts with TMEM177 in a COX20-dependent manner. Interacts with COX20. Interacts with COX16. Cu cation is required as a cofactor.

It localises to the mitochondrion inner membrane. It carries out the reaction 4 Fe(II)-[cytochrome c] + O2 + 8 H(+)(in) = 4 Fe(III)-[cytochrome c] + 2 H2O + 4 H(+)(out). Functionally, component of the cytochrome c oxidase, the last enzyme in the mitochondrial electron transport chain which drives oxidative phosphorylation. The respiratory chain contains 3 multisubunit complexes succinate dehydrogenase (complex II, CII), ubiquinol-cytochrome c oxidoreductase (cytochrome b-c1 complex, complex III, CIII) and cytochrome c oxidase (complex IV, CIV), that cooperate to transfer electrons derived from NADH and succinate to molecular oxygen, creating an electrochemical gradient over the inner membrane that drives transmembrane transport and the ATP synthase. Cytochrome c oxidase is the component of the respiratory chain that catalyzes the reduction of oxygen to water. Electrons originating from reduced cytochrome c in the intermembrane space (IMS) are transferred via the dinuclear copper A center (CU(A)) of subunit 2 and heme A of subunit 1 to the active site in subunit 1, a binuclear center (BNC) formed by heme A3 and copper B (CU(B)). The BNC reduces molecular oxygen to 2 water molecules using 4 electrons from cytochrome c in the IMS and 4 protons from the mitochondrial matrix. The sequence is that of Cytochrome c oxidase subunit 2 (MT-CO2) from Alouatta palliata (Mantled howler monkey).